The sequence spans 502 residues: Probable cytochrome P450 514A4 (502 aa).

A helical membrane pass occupies residues 4 to 24; it reads IFTIILTITILVLSLILKDLL. Cys-448 serves as a coordination point for heme.

The protein belongs to the cytochrome P450 family. It depends on heme as a cofactor.

It is found in the membrane. The chain is Probable cytochrome P450 514A4 (cyp514A4) from Dictyostelium discoideum (Social amoeba).